A 679-amino-acid polypeptide reads, in one-letter code: MPKYHLKAPYSPKGDQPTAIARLVEGVNQGQRYQTLLGATGTGKTFTIANLIAQTGRPALVLAHNKTLAAQLCNEFREFFPDNSVEYFISYYDYYQPEAYVPVSDTYIAKTSSINEEIDMLRHSATRSLFERNDVIVVASISCIYGLGIPSEYLKAAVKFKVGETLNIRSALRELVENQYSRNDIDITRGRFRVRGDVLEIGPAYEDRLVRIELFGDEVEAIRYLDPTTGEILQSLEAINIYPAKHFVTPKERLNVAVQAIRDELRGRLQFLNEQGKLLEAQRLEQRTTYDLEMLREVGYCNGVENYARHLAGRSAGTPPECLIDYFPEDWLLVVDESHVTCSQLKAMYNGDQARKKVLIEHGFRLPSAADNRPLKSEEFWSKARQTVFVSATPGDWELKQSDGHLAEQVIRPTGVLDPLVEVRPTQGQVDDLLAEIRIRAEKQERVLITTLTKRMAEDLTDYLAENDVRVRYLHSEIHSIERIEIIQDLRLGEYDVLVGVNLLREGLDLPEVSLVVILDADKEGFLRAERSLIQTIGRAARHVDGMALLYADNLTDSMSRAISETERRREIQKAYNELNGIVPRPAGKRASNSILSFLELSRRLQTDGKDADLVQITGRAVDALDSDQDAGLALDALPELIDQLETKMKEAAKNLNFEEAASLRDRIKKFRQKLIRNT.

Positions 25 to 412 (EGVNQGQRYQ…DGHLAEQVIR (388 aa)) constitute a Helicase ATP-binding domain. 38-45 (GATGTGKT) is an ATP binding site. The Beta-hairpin signature appears at 91–114 (YYDYYQPEAYVPVSDTYIAKTSSI). The 163-residue stretch at 429 to 591 (QVDDLLAEIR…IVPRPAGKRA (163 aa)) folds into the Helicase C-terminal domain. The region spanning 639–674 (PELIDQLETKMKEAAKNLNFEEAASLRDRIKKFRQK) is the UVR domain.

Belongs to the UvrB family. As to quaternary structure, forms a heterotetramer with UvrA during the search for lesions. Interacts with UvrC in an incision complex.

The protein localises to the cytoplasm. In terms of biological role, the UvrABC repair system catalyzes the recognition and processing of DNA lesions. A damage recognition complex composed of 2 UvrA and 2 UvrB subunits scans DNA for abnormalities. Upon binding of the UvrA(2)B(2) complex to a putative damaged site, the DNA wraps around one UvrB monomer. DNA wrap is dependent on ATP binding by UvrB and probably causes local melting of the DNA helix, facilitating insertion of UvrB beta-hairpin between the DNA strands. Then UvrB probes one DNA strand for the presence of a lesion. If a lesion is found the UvrA subunits dissociate and the UvrB-DNA preincision complex is formed. This complex is subsequently bound by UvrC and the second UvrB is released. If no lesion is found, the DNA wraps around the other UvrB subunit that will check the other stand for damage. The polypeptide is UvrABC system protein B (Prochlorococcus marinus (strain MIT 9313)).